A 678-amino-acid polypeptide reads, in one-letter code: NADPH--cytochrome P450 reductase (678 aa).

Residues 1 to 21 (MADSNMDAGTTTSEMVAEEVS) lie on the Lumenal side of the membrane. The helical transmembrane segment at 22–42 (LFSTTDVILFSLIVGVMTYWF) threads the bilayer. Over 43 to 678 (LFRKKKEEVP…KGRYSLDVWS (636 aa)) the chain is Cytoplasmic. At serine 63 the chain carries Phosphoserine. A Flavodoxin-like domain is found at 80–224 (IIVFYGSQTG…DFITWREQFW (145 aa)). Residues 86-91 (SQTGTA), 138-141 (ATYG), 173-182 (LGNKTYEHFN), and aspartate 208 each bind FMN. The region spanning 279-521 (KNPFLAVVTT…YVRKSQFRLP (243 aa)) is the FAD-binding FR-type domain. Arginine 298 is a binding site for NADP(+). FAD is bound by residues arginine 424, 454–457 (RYYS), 472–474 (CAV), tyrosine 478, and 488–491 (GVAT). NADP(+) contacts are provided by residues threonine 535, 596 to 597 (SR), 602 to 606 (KVYVQ), and aspartate 639. Tryptophan 677 contacts FAD.

It belongs to the NADPH--cytochrome P450 reductase family. In the N-terminal section; belongs to the flavodoxin family. This sequence in the C-terminal section; belongs to the flavoprotein pyridine nucleotide cytochrome reductase family. Requires FAD as cofactor. FMN is required as a cofactor.

Its subcellular location is the endoplasmic reticulum membrane. It carries out the reaction 2 oxidized [cytochrome P450] + NADPH = 2 reduced [cytochrome P450] + NADP(+) + H(+). Its function is as follows. This enzyme is required for electron transfer from NADP to cytochrome P450 in microsomes. It can also provide electron transfer to heme oxygenase and cytochrome B5. In Bos taurus (Bovine), this protein is NADPH--cytochrome P450 reductase.